A 432-amino-acid polypeptide reads, in one-letter code: Adenylosuccinate synthetase (432 aa).

GTP is bound by residues 13 to 19 (GDEGKGK) and 41 to 43 (GHT). The Proton acceptor role is filled by Asp14. Asp14 and Gly41 together coordinate Mg(2+). IMP-binding positions include 14–17 (DEGK), 39–42 (NAGH), Thr130, Arg144, Gln225, Thr240, and Arg304. The Proton donor role is filled by His42. 300–306 (ATTGRKR) provides a ligand contact to substrate. GTP is bound by residues Arg306, 332–334 (KLD), and 415–417 (STG).

This sequence belongs to the adenylosuccinate synthetase family. In terms of assembly, homodimer. Mg(2+) serves as cofactor.

It localises to the cytoplasm. The enzyme catalyses IMP + L-aspartate + GTP = N(6)-(1,2-dicarboxyethyl)-AMP + GDP + phosphate + 2 H(+). Its pathway is purine metabolism; AMP biosynthesis via de novo pathway; AMP from IMP: step 1/2. Functionally, plays an important role in the de novo pathway of purine nucleotide biosynthesis. Catalyzes the first committed step in the biosynthesis of AMP from IMP. This chain is Adenylosuccinate synthetase, found in Tolumonas auensis (strain DSM 9187 / NBRC 110442 / TA 4).